Consider the following 693-residue polypeptide: Putative transmembrane protein ORF68 (693 aa).

The signal sequence occupies residues 1–17 (MILTIILYTLLFSTCSA). The Extracellular portion of the chain corresponds to 18–666 (QSVHTMPEAV…WLTKFGTGGG (649 aa)). Residues 208–256 (SKAANNRMDALEDGMKNINTRVTETNLLLEKLSTEVTGALTQLENEIKM) adopt a coiled-coil conformation. Residues 667–687 (IAGVTIGLLLPILAIVFSCYV) form a helical membrane-spanning segment. The Cytoplasmic portion of the chain corresponds to 688 to 693 (FCKRRV).

It is found in the host membrane. The protein is Putative transmembrane protein ORF68 of Magallana gigas (Pacific oyster).